An 88-amino-acid chain; its full sequence is Large ribosomal subunit protein bL27 (88 aa).

Residues 1–21 are disordered; that stretch reads MAHKKGQGSTQNNRDSAGRRL.

This sequence belongs to the bacterial ribosomal protein bL27 family.

The sequence is that of Large ribosomal subunit protein bL27 from Helicobacter pylori (strain P12).